The primary structure comprises 332 residues: GTP 3',8-cyclase (332 aa).

The Radical SAM core domain maps to 7-221 (SYDRLHDYVR…FDTCKDNGLA (215 aa)). Residue R16 coordinates GTP. C23 and C27 together coordinate [4Fe-4S] cluster. Y29 serves as a coordination point for S-adenosyl-L-methionine. Residue C30 coordinates [4Fe-4S] cluster. Residue R66 participates in GTP binding. G70 provides a ligand contact to S-adenosyl-L-methionine. Residue T97 participates in GTP binding. S-adenosyl-L-methionine is bound at residue S121. K158 lines the GTP pocket. S-adenosyl-L-methionine is bound at residue M192. Residues C256 and C259 each contribute to the [4Fe-4S] cluster site. 261–263 (RLR) is a binding site for GTP. Residue C273 coordinates [4Fe-4S] cluster.

It belongs to the radical SAM superfamily. MoaA family. In terms of assembly, monomer and homodimer. Requires [4Fe-4S] cluster as cofactor.

It catalyses the reaction GTP + AH2 + S-adenosyl-L-methionine = (8S)-3',8-cyclo-7,8-dihydroguanosine 5'-triphosphate + 5'-deoxyadenosine + L-methionine + A + H(+). The protein operates within cofactor biosynthesis; molybdopterin biosynthesis. Catalyzes the cyclization of GTP to (8S)-3',8-cyclo-7,8-dihydroguanosine 5'-triphosphate. This Lactiplantibacillus plantarum (strain ATCC BAA-793 / NCIMB 8826 / WCFS1) (Lactobacillus plantarum) protein is GTP 3',8-cyclase.